Consider the following 351-residue polypeptide: Penicillolysin (351 aa).

Positions 1–19 are cleaved as a signal peptide; that stretch reads MRFTTLSTAFLALAQNVYA. A propeptide spanning residues 20 to 174 is cleaved from the precursor; it reads FPIESDLSAL…TKALKPLDRR (155 aa). Asparagine 52 and asparagine 181 each carry an N-linked (GlcNAc...) asparagine glycan. Histidine 302 is a binding site for Zn(2+). Residue glutamate 303 is part of the active site. Positions 306 and 317 each coordinate Zn(2+).

Belongs to the peptidase M35 family. Zn(2+) serves as cofactor.

The catalysed reaction is Preferential cleavage of bonds with hydrophobic residues in P1'. Also 3-Asn-|-Gln-4 and 8-Gly-|-Ser-9 bonds in insulin B chain.. The sequence is that of Penicillolysin (plnC) from Penicillium citrinum.